Consider the following 548-residue polypeptide: Probable 2,3-bisphosphoglycerate-independent phosphoglycerate mutase (548 aa).

2 residues coordinate Mn(2+): aspartate 20 and serine 73. The Phosphoserine intermediate role is filled by serine 73. Substrate contacts are provided by residues histidine 134, 164–165 (RD), arginine 200, arginine 207, 279–282 (RGDR), and lysine 354. The Mn(2+) site is built by aspartate 422, histidine 426, aspartate 463, histidine 464, and histidine 493.

It belongs to the BPG-independent phosphoglycerate mutase family. As to quaternary structure, monomer. Mn(2+) is required as a cofactor.

The enzyme catalyses (2R)-2-phosphoglycerate = (2R)-3-phosphoglycerate. It functions in the pathway carbohydrate degradation; glycolysis; pyruvate from D-glyceraldehyde 3-phosphate: step 3/5. Its function is as follows. Catalyzes the interconversion of 2-phosphoglycerate and 3-phosphoglycerate. The sequence is that of Probable 2,3-bisphosphoglycerate-independent phosphoglycerate mutase (gpmI) from Leptospira interrogans serogroup Icterohaemorrhagiae serovar copenhageni (strain Fiocruz L1-130).